The chain runs to 261 residues: DNA repair protein RecO (261 aa).

The protein belongs to the RecO family.

Functionally, involved in DNA repair and RecF pathway recombination. This chain is DNA repair protein RecO, found in Limosilactobacillus reuteri (strain DSM 20016) (Lactobacillus reuteri).